We begin with the raw amino-acid sequence, 320 residues long: Ferrochelatase (320 aa).

Residues His-194 and Glu-275 each contribute to the Fe cation site.

This sequence belongs to the ferrochelatase family.

It is found in the cytoplasm. The enzyme catalyses heme b + 2 H(+) = protoporphyrin IX + Fe(2+). The protein operates within porphyrin-containing compound metabolism; protoheme biosynthesis; protoheme from protoporphyrin-IX: step 1/1. In terms of biological role, catalyzes the ferrous insertion into protoporphyrin IX. The chain is Ferrochelatase from Stenotrophomonas maltophilia (strain R551-3).